Reading from the N-terminus, the 334-residue chain is MTPLDAKRPLQLNHQGQLRHFLSLDGLPRELLTEILDTADSFLEVGARAVKKVPLLRGKTVCNVFFENSTRTRTTFELAAQRLSADVITLNVSTSSTSKGETLFDTLRNLEAMAADMFVVRHADSGAAHFIAEHVCPDVAIINGGDGRHAHPTQGMLDMLTIRRHKGGFENLSVAIVGDILHSRVARSNMLALQALGCPDIRVIGPKTLLPVGVEQYGVKVYTDLNEGLKDVDVVIMLRLQRERMTGGLLPSEGEFYRLFGLTTARLAAAKPDAIVMHPGPINRGVEIESAVADGAHSVILNQVTYGIAIRMAVLSMAMSGQNAQRQFEQENAQ.

Residues R71 and T72 each coordinate carbamoyl phosphate. K99 contacts L-aspartate. R121, H151, and Q154 together coordinate carbamoyl phosphate. R184 and R239 together coordinate L-aspartate. Residues G280 and P281 each coordinate carbamoyl phosphate.

This sequence belongs to the aspartate/ornithine carbamoyltransferase superfamily. ATCase family. In terms of assembly, heterododecamer (2C3:3R2) of six catalytic PyrB chains organized as two trimers (C3), and six regulatory PyrI chains organized as three dimers (R2).

The enzyme catalyses carbamoyl phosphate + L-aspartate = N-carbamoyl-L-aspartate + phosphate + H(+). Its pathway is pyrimidine metabolism; UMP biosynthesis via de novo pathway; (S)-dihydroorotate from bicarbonate: step 2/3. Its function is as follows. Catalyzes the condensation of carbamoyl phosphate and aspartate to form carbamoyl aspartate and inorganic phosphate, the committed step in the de novo pyrimidine nucleotide biosynthesis pathway. In Pseudomonas savastanoi pv. phaseolicola (strain 1448A / Race 6) (Pseudomonas syringae pv. phaseolicola (strain 1448A / Race 6)), this protein is Aspartate carbamoyltransferase catalytic subunit.